The primary structure comprises 213 residues: Bcl-2-related ovarian killer protein (213 aa).

Position 7 is a phosphoserine (Ser-7). Residues Met-15–Arg-45 are interactions with ITPR1. Glycyl lysine isopeptide (Lys-Gly) (interchain with G-Cter in ubiquitin) cross-links involve residues Lys-25 and Lys-32. The BH4 signature appears at Lys-32 to Leu-44. The BH3 signature appears at Val-67–Pro-83. The nuclear export signal stretch occupies residues Leu-71–Glu-79. Residues His-113–Ala-132 carry the BH1 motif. Glycyl lysine isopeptide (Lys-Gly) (interchain with G-Cter in ubiquitin) cross-links involve residues Lys-160 and Lys-177. Residues Trp-165 to Val-179 carry the BH2 motif. The helical transmembrane segment at Trp-190 to Leu-210 threads the bilayer.

This sequence belongs to the Bcl-2 family. As to quaternary structure, monomer; positively regulates apoptotic process. Homodimer. Heterodimer. Oligomer; promoted by apoptotic stimuli and BH3-only proteins; mediates constitutive activation. Interacts (via BH4 domain) with ITPR1; enhances BOK expression and stabilization; limits apoptosis and prevents ubiquitination and then degradation; protects ITPR1 from proteolysis by CASP3 during apoptosis. Interacts with ITPR2 and ITPR3; binds most strongly to ITPR2, and barely to ITPR3; regulates their expression. Interacts with XPO1; translocates to the cytoplasm. Interacts with BNIP3; promotes oligomerization. Post-translationally, ubiquitinated by AMFR/gp78 E3 ubiquitin ligase complex; mediates degradation by ubiquitin-proteasome pathway in a VCP/p97-dependent manner; prevents from proapoptotic activity; promotes degradation of newly synthesized proteins that are not ITPR1 associated. In terms of tissue distribution, widely expressed. Highly expressed in brain, kidney, and spleen.

It localises to the mitochondrion membrane. The protein localises to the endoplasmic reticulum membrane. Its subcellular location is the mitochondrion inner membrane. It is found in the cytoplasm. The protein resides in the nucleus. It localises to the mitochondrion. The protein localises to the endoplasmic reticulum. Its subcellular location is the mitochondrion outer membrane. It is found in the early endosome membrane. The protein resides in the recycling endosome membrane. It localises to the nucleus outer membrane. The protein localises to the golgi apparatus. Its subcellular location is the cis-Golgi network membrane. It is found in the trans-Golgi network membrane. The protein resides in the membrane. Apoptosis regulator that functions through different apoptotic signaling pathways. Plays a roles as pro-apoptotic protein that positively regulates intrinsic apoptotic process in a BAX- and BAK1-dependent manner or in a BAX- and BAK1-independent manner. In response to endoplasmic reticulum stress promotes mitochondrial apoptosis through downstream BAX/BAK1 activation and positive regulation of PERK-mediated unfolded protein response. Activates apoptosis independently of heterodimerization with survival-promoting BCL2 and BCL2L1 through induction of mitochondrial outer membrane permeabilization, in a BAX- and BAK1-independent manner, in response to inhibition of ERAD-proteasome degradation system, resulting in cytochrome c release. In response to DNA damage, mediates intrinsic apoptotic process in a TP53-dependent manner. Plays a role in granulosa cell apoptosis by CASP3 activation. Plays a roles as anti-apoptotic protein during neuronal apoptotic process, by negatively regulating poly ADP-ribose polymerase-dependent cell death through regulation of neuronal calcium homeostasis and mitochondrial bioenergetics in response to NMDA excitation. In addition to its role in apoptosis, may regulate trophoblast cell proliferation during the early stages of placental development, by acting on G1/S transition through regulation of CCNE1 expression. May also play a role as an inducer of autophagy by disrupting interaction between MCL1 and BECN1. The polypeptide is Bcl-2-related ovarian killer protein (Mus musculus (Mouse)).